The following is a 312-amino-acid chain: Ribosomal protein uL3 glutamine methyltransferase (312 aa).

It belongs to the protein N5-glutamine methyltransferase family. PrmB subfamily.

The catalysed reaction is L-glutaminyl-[ribosomal protein uL3] + S-adenosyl-L-methionine = N(5)-methyl-L-glutaminyl-[ribosomal protein uL3] + S-adenosyl-L-homocysteine + H(+). Its function is as follows. Methylates large ribosomal subunit protein uL3 on a specific glutamine residue. This chain is Ribosomal protein uL3 glutamine methyltransferase, found in Xylella fastidiosa (strain Temecula1 / ATCC 700964).